The following is a 1246-amino-acid chain: Zinc finger protein 687a (1246 aa).

Residues 24–47 show a composition bias toward basic and acidic residues; sequence KEAIQSDTHGNHNEHSSVVGKERS. The tract at residues 24-387 is disordered; it reads KEAIQSDTHG…PTLVESASDA (364 aa). Polar residues-rich tracts occupy residues 88–111 and 163–195; these read GEFS…SSVP and AFTN…FSSK. Residues 287–301 are compositionally biased toward low complexity; the sequence is SSTNPTSLTSTNNLP. A compositionally biased stretch (basic and acidic residues) spans 302-317; sequence VEEKDLEHIIEERDSP. Positions 326–338 are enriched in polar residues; the sequence is QSRTSLPSNSQGA. Basic and acidic residues-rich tracts occupy residues 341–350 and 360–375; these read SKQRITREEA and MQEK…EGKS. The C2H2-type 1 zinc-finger motif lies at 587 to 619; the sequence is YRCLECGDAFALERSLARHYDRRSMRIEVTCNH. Residues 696 to 719 form a C2H2-type 2; degenerate zinc finger; that stretch reads HSCPECWSTFKGKQELVAHFQEVE. 3 C2H2-type zinc fingers span residues 817 to 840, 854 to 876, and 885 to 908; these read HKCP…ASQH, YKCV…IDTH, and FKCP…KDTH. Positions 907–953 are disordered; it reads THRETSNHDGTSTQNSLVKMESSDGEEWGRDEEEDKGKVSDANSAVP. The span at 914–923 shows a compositional bias: polar residues; it reads HDGTSTQNSL. Over residues 929 to 940 the composition is skewed to acidic residues; it reads SDGEEWGRDEEE. C2H2-type zinc fingers lie at residues 958–981 and 988–1011; these read WSCS…TEQH and FPCT…RVKH. A C2H2-type 8; degenerate zinc finger spans residues 1018 to 1044; that stretch reads FYCQLCTGEKRSFSSKLILEKHIQAQH. The disordered stretch occupies residues 1045-1093; that stretch reads AGERGTATQSQAVPQFTDGADSSSEHDAGVLGGSSVEPESRLAESTLTR. 2 C2H2-type zinc fingers span residues 1137–1160 and 1210–1232; these read AQCQ…FISH and HICK…FRTH.

The protein belongs to the krueppel C2H2-type zinc-finger protein family. Widely expressed with highest levels in kidney, spleen and ovary.

The protein resides in the nucleus. Functionally, may be involved in transcriptional regulation. This is Zinc finger protein 687a (znf687a) from Danio rerio (Zebrafish).